The primary structure comprises 389 residues: Dihydroorotase (389 aa).

Zn(2+) is bound by residues H51 and H53. Substrate is bound by residues 53 to 55 (HVR) and N85. Zn(2+) is bound by residues K133, H158, H193, and D256. An N6-carboxylysine modification is found at K133. D256 is a catalytic residue. Substrate contacts are provided by residues H260 and 274-275 (PG).

It belongs to the metallo-dependent hydrolases superfamily. DHOase family. Class I DHOase subfamily. Zn(2+) is required as a cofactor.

The catalysed reaction is (S)-dihydroorotate + H2O = N-carbamoyl-L-aspartate + H(+). It participates in pyrimidine metabolism; UMP biosynthesis via de novo pathway; (S)-dihydroorotate from bicarbonate: step 3/3. Its function is as follows. Catalyzes the reversible cyclization of carbamoyl aspartate to dihydroorotate. The chain is Dihydroorotase from Sulfolobus acidocaldarius (strain ATCC 33909 / DSM 639 / JCM 8929 / NBRC 15157 / NCIMB 11770).